The following is a 182-amino-acid chain: Ribulose bisphosphate carboxylase small subunit, chloroplastic (182 aa).

The N-terminal 58 residues, 1–58, are a transit peptide targeting the chloroplast; that stretch reads MASSMLSTATVASINRVSPAQATMVAPFTGLKSTPVFPTTRKTNSDITSITSNGGKVQ.

It belongs to the RuBisCO small chain family. In terms of assembly, heterohexadecamer of 8 large and 8 small subunits.

The protein resides in the plastid. The protein localises to the chloroplast. RuBisCO catalyzes two reactions: the carboxylation of D-ribulose 1,5-bisphosphate, the primary event in carbon dioxide fixation, as well as the oxidative fragmentation of the pentose substrate. Both reactions occur simultaneously and in competition at the same active site. Although the small subunit is not catalytic it is essential for maximal activity. This chain is Ribulose bisphosphate carboxylase small subunit, chloroplastic, found in Manihot esculenta (Cassava).